The chain runs to 608 residues: Myosin light chain kinase 2, skeletal/cardiac muscle (608 aa).

The disordered stretch occupies residues 1 to 160; that stretch reads MATENGAVEL…RGSPAFLHSP (160 aa). Ala2 is modified (N-acetylalanine). Basic and acidic residues-rich tracts occupy residues 31 to 43 and 50 to 63; these read AAEK…DPEK and TKQD…KKDA. The segment covering 82 to 91 has biased composition (gly residues); it reads GSQGPAGEGG. The span at 116–127 shows a compositional bias: basic and acidic residues; the sequence is ASEKKPEAEKGP. Phosphoserine occurs at positions 153, 159, and 161. The interval 214 to 235 is disordered; that stretch reads QKEAGEKAPGQADQAKVQGDTS. Positions 297-552 constitute a Protein kinase domain; sequence MNSKEALGGG…AAQCLAHPWL (256 aa). ATP contacts are provided by residues 303–311 and Lys326; that span reads LGGGKFGAV. Asp418 acts as the Proton acceptor in catalysis. Position 457 is a phosphothreonine (Thr457). A calmodulin-binding region spans residues 586 to 598; sequence IAVSAANRFKKIS.

The protein belongs to the protein kinase superfamily. CAMK Ser/Thr protein kinase family. May interact with centrin.

The protein localises to the cytoplasm. It carries out the reaction L-seryl-[myosin light chain] + ATP = O-phospho-L-seryl-[myosin light chain] + ADP + H(+). It catalyses the reaction L-threonyl-[myosin light chain] + ATP = O-phospho-L-threonyl-[myosin light chain] + ADP + H(+). Functionally, implicated in the level of global muscle contraction and cardiac function. Phosphorylates a specific serine in the N-terminus of a myosin light chain. The protein is Myosin light chain kinase 2, skeletal/cardiac muscle (MYLK2) of Oryctolagus cuniculus (Rabbit).